We begin with the raw amino-acid sequence, 276 residues long: NADPH-dependent 7-cyano-7-deazaguanine reductase (276 aa).

83–85 (IES) contributes to the substrate binding site. 85–86 (SK) contributes to the NADPH binding site. Cys-184 (thioimide intermediate) is an active-site residue. The active-site Proton donor is Asp-191. 223-224 (HE) is a binding site for substrate. 252 to 253 (RG) provides a ligand contact to NADPH.

It belongs to the GTP cyclohydrolase I family. QueF type 2 subfamily. As to quaternary structure, homodimer.

It is found in the cytoplasm. The catalysed reaction is 7-aminomethyl-7-carbaguanine + 2 NADP(+) = 7-cyano-7-deazaguanine + 2 NADPH + 3 H(+). The protein operates within tRNA modification; tRNA-queuosine biosynthesis. Catalyzes the NADPH-dependent reduction of 7-cyano-7-deazaguanine (preQ0) to 7-aminomethyl-7-deazaguanine (preQ1). The sequence is that of NADPH-dependent 7-cyano-7-deazaguanine reductase from Pseudomonas syringae pv. tomato (strain ATCC BAA-871 / DC3000).